Here is an 845-residue protein sequence, read N- to C-terminus: Cadherin-related family member 5 (845 aa).

The first 25 residues, 1-25, serve as a signal peptide directing secretion; sequence MGSWALLWPPLLFTGLLVRPPGTMA. Topologically, residues 26–669 are extracellular; sequence QAQYCSVNKD…DKRFSVVDMA (644 aa). N-linked (GlcNAc...) asparagine glycosylation is found at Asn-44, Asn-81, Asn-140, Asn-198, Asn-297, Asn-308, and Asn-405. 4 Cadherin domains span residues 71–124, 125–237, 249–354, and 355–459; these read FRIQ…APEF, PFKT…PPWF, IQAQ…PPRF, and PQRL…PPST. Residues 452–661 are disordered; the sequence is SEQEPPSTDV…SSGGGPSEDK (210 aa). The segment covering 506-518 has biased composition (low complexity); it reads SGTTLRPPTSSTP. N-linked (GlcNAc...) asparagine glycosylation is present at Asn-526. 3 stretches are compositionally biased toward polar residues: residues 539-549, 556-594, and 602-611; these read TAQTPKPGTSQ, GTST…SHQP, and AQTPEAGTSQ. 3 consecutive repeat copies span residues 540-570, 571-601, and 602-631. Positions 540–645 are 4 X 31 AA approximate tandem repeats; the sequence is AQTPKPGTSQ…PEPGTSQPMP (106 aa). The stretch at 632–645 is one 4; truncated repeat; that stretch reads TAQTPEPGTSQPMP. Residues 633–652 show a composition bias toward low complexity; the sequence is AQTPEPGTSQPMPLSKSTPS. Residues 670–690 form a helical membrane-spanning segment; sequence ALGGVLGALLLLALLGLAVLV. Residues 691–845 are Cytoplasmic-facing; the sequence is HKHYGPRLKC…DAPGGDDSYI (155 aa). Positions 691-845 are mediates interaction with USH1C and MYO7B and is required for proper localization to microvilli tips and function in microvilli organization; the sequence is HKHYGPRLKC…DAPGGDDSYI (155 aa). The disordered stretch occupies residues 724-789; the sequence is ANWAPVPSPT…KERRPEGGYK (66 aa). The span at 729-762 shows a compositional bias: pro residues; that stretch reads VPSPTHDPKPAEAPMPAEPAPPGPASPGGAPEPP. Ser-770 is subject to Phosphoserine. Thr-810 is modified (phosphothreonine). The segment at 811–845 is disordered; that stretch reads LDVDGASDSGSGDEGEGAGRGGGPYDAPGGDDSYI. Phosphoserine occurs at positions 817, 819, and 821. The span at 835–845 shows a compositional bias: low complexity; it reads YDAPGGDDSYI.

In terms of assembly, part of the IMAC/intermicrovillar adhesion complex/intermicrovillar tip-link complex composed of ANKS4B, MYO7B, USH1C, CDHR2 and CDHR5. Interacts (via cytoplasmic domain) with USH1C and MYO7B; required for proper localization of CDHR5 to microvilli tips and its function in brush border differentiation. N- and O-glycosylated. Highest expression in kidney, liver, colon and small intestine. In kidney, expressed apically along brush border of proximal convoluted tubule but not in cortical collecting ducts. Isoform 1 is expressed primarily in adult small intestine and colon. Isoform 2 is highly expressed in fetal liver. Expressed in duodenum with higher expression in enterocytes along the villus axis and lower expression in crypts (at protein level).

The protein localises to the apical cell membrane. Its subcellular location is the cell projection. It is found in the microvillus membrane. Intermicrovillar adhesion molecule that forms, via its extracellular domain, calcium-dependent heterophilic complexes with CDHR2 on adjacent microvilli. Thereby, controls the packing of microvilli at the apical membrane of epithelial cells. Through its cytoplasmic domain, interacts with microvillus cytoplasmic proteins to form the intermicrovillar adhesion complex/IMAC. This complex plays a central role in microvilli and epithelial brush border differentiation. The chain is Cadherin-related family member 5 from Homo sapiens (Human).